The primary structure comprises 470 residues: 6-phospho-beta-galactosidase (470 aa).

D-galactose 6-phosphate contacts are provided by Gln19, His116, Asn159, Glu160, and Asn297. Glu160 functions as the Proton donor in the catalytic mechanism. Glu375 serves as the catalytic Nucleophile. Positions 430, 431, 437, and 439 each coordinate D-galactose 6-phosphate.

This sequence belongs to the glycosyl hydrolase 1 family.

The enzyme catalyses a 6-phospho-beta-D-galactoside + H2O = D-galactose 6-phosphate + an alcohol. The protein operates within carbohydrate metabolism; lactose degradation; D-galactose 6-phosphate and beta-D-glucose from lactose 6-phosphate: step 1/1. The sequence is that of 6-phospho-beta-galactosidase from Staphylococcus aureus (strain COL).